The primary structure comprises 198 residues: NADH-quinone oxidoreductase subunit C (198 aa).

It belongs to the complex I 30 kDa subunit family. As to quaternary structure, NDH-1 is composed of 14 different subunits. Subunits NuoB, C, D, E, F, and G constitute the peripheral sector of the complex.

Its subcellular location is the cell inner membrane. The catalysed reaction is a quinone + NADH + 5 H(+)(in) = a quinol + NAD(+) + 4 H(+)(out). Its function is as follows. NDH-1 shuttles electrons from NADH, via FMN and iron-sulfur (Fe-S) centers, to quinones in the respiratory chain. The immediate electron acceptor for the enzyme in this species is believed to be ubiquinone. Couples the redox reaction to proton translocation (for every two electrons transferred, four hydrogen ions are translocated across the cytoplasmic membrane), and thus conserves the redox energy in a proton gradient. The chain is NADH-quinone oxidoreductase subunit C from Janthinobacterium sp. (strain Marseille) (Minibacterium massiliensis).